The chain runs to 719 residues: Forkhead box protein K1 (719 aa).

N-acetylalanine is present on A2. Positions 2–40 are interaction with SIN3A and SIN3B; it reads AEVGEDSGARALLALRSAPCSPVLCAAAAAAAFPATTSP. The segment at 35–67 is disordered; that stretch reads PATTSPPPPAQPPPGPPALPAEPGPGPVPSTVA. A compositionally biased stretch (pro residues) spans 38 to 62; that stretch reads TSPPPPAQPPPGPPALPAEPGPGPV. The segment at 81–406 is required for interaction with FOXO4 and MEF2C; that stretch reads AASVRQSPGP…PLSSRSAPAS (326 aa). Position 87 is a phosphoserine (S87). In terms of domain architecture, FHA spans 109-161; the sequence is VTIGRNSSQGSVDLSMGLSSFISRRHLQLSFQEPHFYLRCLGKNGVFVDGAFQ. 2 positions are modified to omega-N-methylarginine: R147 and R177. Phosphoserine is present on residues S199, S209, S225, and S229. A phosphothreonine mark is found at T231 and T233. Phosphoserine is present on residues S239, S243, S281, and S285. Residues 291 to 386 constitute a DNA-binding region (fork-head); that stretch reads KPPYSYAQLI…EQAFRKRRQR (96 aa). A disordered region spans residues 399 to 443; sequence SSRSAPASPTHPGLMSPRSSGLQTPECLSREGSPIPHDPDLGSKL. S402 and S406 each carry phosphoserine. A Phosphothreonine modification is found at T408. The residue at position 414 (S414) is a Phosphoserine. T422 carries the phosphothreonine modification. Phosphoserine occurs at positions 427, 431, and 445. The segment covering 665-685 has biased composition (low complexity); the sequence is AANAAPTPAASTTTSASSSGE. The interval 665 to 719 is disordered; it reads AANAAPTPAASTTTSASSSGEPEVKRSRVEEPGGTATTQPTAMAATGPQGPGTGE. A compositionally biased stretch (basic and acidic residues) spans 686–695; the sequence is PEVKRSRVEE. Residues 696–712 show a composition bias toward low complexity; sequence PGGTATTQPTAMAATGP.

Interacts with SIN3A and SIN3B (via PAH2) to form a complex which represses transcription. Component of SIN3A-, but not SIN3B-, containing multiprotein complexes. Interacts with FOXO4 and MEF2C; both interactions inhibit FOXO4 and MEF2C transactivation activity. Interacts (when phosphorylated) with YWHAE/14-3-3-epsilon; promotes sequestration in the cytoplasm and leads to impaired ability to bind DNA. Interacts with FHL2. Interacts with SRF. Interacts with DVL2 and DVL3; the interaction induces DVL2 nuclear translocation. Interacts with BAP1 (when phosphorylated). Accessory component of the polycomb repressive deubiquitinase (PR-DUB) complex, at least composed of BAP1, one of ASXL1, ASXL2 or (probably) ASXL3 and one of MBD5 or MBD6. The PR-DUB core associates with a number of accessory proteins, including FOXK1, FOXK2, KDM1B, HCFC1 and OGT. Post-translationally, phosphorylation by GSK3 (GSK3A or GSK3B) promotes interaction with YWHAE/14-3-3-epsilon and retention in the cytoplasm. In response to mTORC1 signaling, phosphorylation by GSK3 is prevented, leading to translocation to the nucleus. In terms of tissue distribution, expressed in tissues and cells in which the myoglobin gene is transcriptionally active including cardiac and skeletal myocytes, brain and kidney. In the adult brain, expressed in the piriform cortex and the indusium griseum. In the hippocampus, expression is localized to the dentate gyrus and CA3 area. In the cerebellum, expression is confined to the Purkinje cell layer. Present in neuroretinal cells: expressed in rod bipolar cells, amacrine cells and ganglion cells (at protein level).

The protein localises to the nucleus. The protein resides in the cytoplasm. Its function is as follows. Transcriptional regulator involved in different processes such as glucose metabolism, aerobic glycolysis, muscle cell differentiation and autophagy. Recognizes and binds the forkhead DNA sequence motif (5'-GTAAACA-3') and can both act as a transcription activator or repressor, depending on the context. Together with FOXK2, acts as a key regulator of metabolic reprogramming towards aerobic glycolysis, a process in which glucose is converted to lactate in the presence of oxygen. Acts by promoting expression of enzymes for glycolysis (such as hexokinase-2 (HK2), phosphofructokinase, pyruvate kinase (PKLR) and lactate dehydrogenase), while suppressing further oxidation of pyruvate in the mitochondria by up-regulating pyruvate dehydrogenase kinases PDK1 and PDK4. Probably plays a role in gluconeogenesis during overnight fasting, when lactate from white adipose tissue and muscle is the main substrate. Involved in mTORC1-mediated metabolic reprogramming: in response to mTORC1 signaling, translocates into the nucleus and regulates the expression of genes associated with glycolysis and downstream anabolic pathways, such as HIF1A, thereby regulating glucose metabolism. Together with FOXK2, acts as a negative regulator of autophagy in skeletal muscle: in response to starvation, enters the nucleus, binds the promoters of autophagy genes and represses their expression, preventing proteolysis of skeletal muscle proteins. Acts as a transcriptional regulator of the myogenic progenitor cell population in skeletal muscle. Binds to the upstream enhancer region (CCAC box) of myoglobin (MB) gene, regulating the myogenic progenitor cell population. Promotes muscle progenitor cell proliferation by repressing the transcriptional activity of FOXO4, thereby inhibiting myogenic differentiation. Involved in remodeling processes of adult muscles that occur in response to physiological stimuli. Required to correct temporal orchestration of molecular and cellular events necessary for muscle repair. Represses myogenic differentiation by inhibiting MEFC activity. Positively regulates Wnt/beta-catenin signaling by translocating DVL into the nucleus. Reduces virus replication, probably by binding the interferon stimulated response element (ISRE) to promote antiviral gene expression. Accessory component of the polycomb repressive deubiquitinase (PR-DUB) complex; recruits the PR-DUB complex to specific FOXK1-bound genes. The chain is Forkhead box protein K1 from Mus musculus (Mouse).